Consider the following 468-residue polypeptide: MFLATLYFVLPLLDLLMSAEVSGGDRLDCVKASDQCLKEQSCSTKYRTLRQCVAGKETNFSLTSGLEAKDECRSAMEALKQKSLYNCRCKRGMKKEKNCLRIYWSMYQSLQGNDLLEDSPYEPVNSRLSDIFRAVPFISDVFQQVEHISKGNNCLDAAKACNLDDTCKKYRSAYITPCTTSMSNEVCNRRKCHKALRQFFDKVPAKHSYGMLFCSCRDVACTERRRQTIVPVCSYEERERPNCLNLQDSCKTNYICRSRLADFFTNCQPESRSVSNCLKENYADCLLAYSGLIGTVMTPNYIDSSSLSVAPWCDCSNSGNDLEDCLKFLNFFKDNTCLKNAIQAFGNGSDVTMWQPAPPVQTTTATTTTAFRIKNKPLGPAGSENEIPTHVLPPCANLQAQKLKSNVSGSTHLCLSDNDYGKDGLAGASSHITTKSMAAPPSCGLSSLPVMVFTALAALLSVSLAETS.

An N-terminal signal peptide occupies residues 1–24; that stretch reads MFLATLYFVLPLLDLLMSAEVSGG. 3 repeat units span residues 25-113, 150-238, and 239-342. A disulfide bridge connects residues Cys36 and Cys42. Asn59 carries an N-linked (GlcNAc...) asparagine glycan. 10 disulfide bridges follow: Cys154–Cys214, Cys161–Cys167, Cys178–Cys192, Cys187–Cys233, Cys216–Cys221, Cys243–Cys313, Cys250–Cys256, Cys267–Cys285, Cys277–Cys337, and Cys315–Cys325. N-linked (GlcNAc...) asparagine glycosylation is found at Asn347 and Asn406. The GPI-anchor amidated serine moiety is linked to residue Ser430. Residues 431-468 constitute a propeptide, removed in mature form; the sequence is HITTKSMAAPPSCGLSSLPVMVFTALAALLSVSLAETS.

The protein belongs to the GDNFR family. As to quaternary structure, interacts with GDNF ligand and RET: forms a 2:2:2 ternary complex composed of GDNF ligand, GFRA1 and RET receptor. Interacts with SORL1, either alone or in complex with GDNF. Interaction between SORL1 and GFRA1 leads to GFRA1 internalization, but not degradation. Expressed in the brain, in hippocampal neurons (at protein level). Isoform 1 and isoform 2 are expressed in heart, brain, lung, liver, kidney and testis.

The protein resides in the cell membrane. The protein localises to the golgi apparatus. It localises to the trans-Golgi network. Its subcellular location is the endosome. It is found in the multivesicular body. Its function is as follows. Coreceptor for GDNF, a neurotrophic factor that enhances survival and morphological differentiation of dopaminergic neurons and increases their high-affinity dopamine uptake. GDNF-binding leads to autophosphorylation and activation of the RET receptor. The polypeptide is GDNF family receptor alpha-1 (Gfra1) (Mus musculus (Mouse)).